The chain runs to 456 residues: GTPase Der (456 aa).

EngA-type G domains are found at residues 4 to 169 (PVVA…PSKD) and 178 to 353 (VQLA…DQSR). GTP contacts are provided by residues 10–17 (GRPNVGKS), 57–61 (DTGGL), 120–123 (NKCE), 184–191 (GRPNVGKS), 231–235 (DTAGI), and 296–299 (NKWD). The KH-like domain occupies 354–439 (RRVTTSVVNE…PIKLFWRGKQ (86 aa)).

This sequence belongs to the TRAFAC class TrmE-Era-EngA-EngB-Septin-like GTPase superfamily. EngA (Der) GTPase family. Associates with the 50S ribosomal subunit.

In terms of biological role, GTPase that plays an essential role in the late steps of ribosome biogenesis. In Prochlorococcus marinus (strain NATL2A), this protein is GTPase Der.